A 269-amino-acid chain; its full sequence is Phosphate import ATP-binding protein PstB (269 aa).

Positions 21–264 (IEIKDFNFFY…PKDRRTENYI (244 aa)) constitute an ABC transporter domain. Residue 55 to 62 (GPSGCGKT) participates in ATP binding.

It belongs to the ABC transporter superfamily. Phosphate importer (TC 3.A.1.7) family. As to quaternary structure, the complex is composed of two ATP-binding proteins (PstB), two transmembrane proteins (PstC and PstA) and a solute-binding protein (PstS).

The protein resides in the cell membrane. The catalysed reaction is phosphate(out) + ATP + H2O = ADP + 2 phosphate(in) + H(+). In terms of biological role, part of the ABC transporter complex PstSACB involved in phosphate import. Responsible for energy coupling to the transport system. The sequence is that of Phosphate import ATP-binding protein PstB from Mycoplasma capricolum subsp. capricolum (strain California kid / ATCC 27343 / NCTC 10154).